The primary structure comprises 352 residues: tRNA N6-adenosine threonylcarbamoyltransferase (352 aa).

Residues His-111 and His-115 each coordinate Fe cation. Substrate-binding positions include 133–137 (LASGG), Asp-166, Gly-179, and Asn-275. Fe cation is bound at residue Asp-300.

It belongs to the KAE1 / TsaD family. The cofactor is Fe(2+).

It is found in the cytoplasm. It carries out the reaction L-threonylcarbamoyladenylate + adenosine(37) in tRNA = N(6)-L-threonylcarbamoyladenosine(37) in tRNA + AMP + H(+). Required for the formation of a threonylcarbamoyl group on adenosine at position 37 (t(6)A37) in tRNAs that read codons beginning with adenine. Is involved in the transfer of the threonylcarbamoyl moiety of threonylcarbamoyl-AMP (TC-AMP) to the N6 group of A37, together with TsaE and TsaB. TsaD likely plays a direct catalytic role in this reaction. This is tRNA N6-adenosine threonylcarbamoyltransferase from Treponema pallidum (strain Nichols).